An 85-amino-acid chain; its full sequence is uncharacterized protein (85 aa).

This sequence belongs to the SF3B5 family.

This is an uncharacterized protein from Schizosaccharomyces pombe (strain 972 / ATCC 24843) (Fission yeast).